Here is a 523-residue protein sequence, read N- to C-terminus: Putative glycerol-3-phosphate transporter 1 (523 aa).

12 helical membrane-spanning segments follow: residues Leu29 to Tyr49, Val102 to Ala122, Ile133 to Tyr153, Phe163 to Ala183, Leu196 to Ala216, Phe228 to Val248, Phe306 to Phe326, Gly344 to Ile364, Ile368 to Phe388, Ser402 to Val422, Ala444 to Ile464, and Gly468 to Leu488.

The protein belongs to the major facilitator superfamily. Organophosphate:Pi antiporter (OPA) (TC 2.A.1.4) family.

Its subcellular location is the membrane. In Arabidopsis thaliana (Mouse-ear cress), this protein is Putative glycerol-3-phosphate transporter 1.